A 92-amino-acid polypeptide reads, in one-letter code: RIIa domain-containing protein 1 (92 aa).

Residues 43 to 77 enclose the RIIa domain; it reads KEVEWLISGFFREIFLKRPDNILEFAADYFTDPRL.

In Homo sapiens (Human), this protein is RIIa domain-containing protein 1 (RIIAD1).